We begin with the raw amino-acid sequence, 77 residues long: Acyl carrier protein (77 aa).

Positions 2 to 77 (ADVLERVTKI…DAVTYIESHL (76 aa)) constitute a Carrier domain. Ser37 is modified (O-(pantetheine 4'-phosphoryl)serine).

It belongs to the acyl carrier protein (ACP) family. 4'-phosphopantetheine is transferred from CoA to a specific serine of apo-ACP by AcpS. This modification is essential for activity because fatty acids are bound in thioester linkage to the sulfhydryl of the prosthetic group.

The protein localises to the cytoplasm. Its pathway is lipid metabolism; fatty acid biosynthesis. Its function is as follows. Carrier of the growing fatty acid chain in fatty acid biosynthesis. This chain is Acyl carrier protein, found in Bacillus mycoides (strain KBAB4) (Bacillus weihenstephanensis).